The primary structure comprises 290 residues: Porphobilinogen deaminase (290 aa).

Cysteine 238 bears the S-(dipyrrolylmethanemethyl)cysteine mark.

This sequence belongs to the HMBS family. Monomer. Requires dipyrromethane as cofactor.

The enzyme catalyses 4 porphobilinogen + H2O = hydroxymethylbilane + 4 NH4(+). Its pathway is porphyrin-containing compound metabolism; protoporphyrin-IX biosynthesis; coproporphyrinogen-III from 5-aminolevulinate: step 2/4. In terms of biological role, tetrapolymerization of the monopyrrole PBG into the hydroxymethylbilane pre-uroporphyrinogen in several discrete steps. This chain is Porphobilinogen deaminase, found in Clostridium botulinum (strain Eklund 17B / Type B).